The sequence spans 1435 residues: DNA polymerase III PolC-type (1435 aa).

Residues 420-576 (YVVFDVETTG…YDTEATGYLL (157 aa)) form the Exonuclease domain.

It belongs to the DNA polymerase type-C family. PolC subfamily.

It localises to the cytoplasm. The enzyme catalyses DNA(n) + a 2'-deoxyribonucleoside 5'-triphosphate = DNA(n+1) + diphosphate. In terms of biological role, required for replicative DNA synthesis. This DNA polymerase also exhibits 3' to 5' exonuclease activity. This Bacillus cereus (strain ATCC 14579 / DSM 31 / CCUG 7414 / JCM 2152 / NBRC 15305 / NCIMB 9373 / NCTC 2599 / NRRL B-3711) protein is DNA polymerase III PolC-type.